A 379-amino-acid polypeptide reads, in one-letter code: DNA replication and repair protein RecF (379 aa).

An ATP-binding site is contributed by 34-41 (GDNGAGKT).

Belongs to the RecF family.

It localises to the cytoplasm. The RecF protein is involved in DNA metabolism; it is required for DNA replication and normal SOS inducibility. RecF binds preferentially to single-stranded, linear DNA. It also seems to bind ATP. This Mesorhizobium japonicum (strain LMG 29417 / CECT 9101 / MAFF 303099) (Mesorhizobium loti (strain MAFF 303099)) protein is DNA replication and repair protein RecF.